The chain runs to 500 residues: Glycerol kinase (500 aa).

Residue threonine 15 coordinates ADP. The ATP site is built by threonine 15, threonine 16, and serine 17. Threonine 15 serves as a coordination point for sn-glycerol 3-phosphate. Arginine 19 serves as a coordination point for ADP. Arginine 85, glutamate 86, tyrosine 137, and aspartate 245 together coordinate sn-glycerol 3-phosphate. Glycerol-binding residues include arginine 85, glutamate 86, tyrosine 137, aspartate 245, and glutamine 246. ADP-binding residues include threonine 267 and glycine 310. ATP is bound by residues threonine 267, glycine 310, glutamine 314, and glycine 411. 2 residues coordinate ADP: glycine 411 and asparagine 415.

This sequence belongs to the FGGY kinase family.

The catalysed reaction is glycerol + ATP = sn-glycerol 3-phosphate + ADP + H(+). It participates in polyol metabolism; glycerol degradation via glycerol kinase pathway; sn-glycerol 3-phosphate from glycerol: step 1/1. Inhibited by fructose 1,6-bisphosphate (FBP). Functionally, key enzyme in the regulation of glycerol uptake and metabolism. Catalyzes the phosphorylation of glycerol to yield sn-glycerol 3-phosphate. The protein is Glycerol kinase of Aeromonas salmonicida (strain A449).